The primary structure comprises 396 residues: Phosphoglycerate kinase (396 aa).

Substrate is bound by residues 21–23 (DFN), R36, 59–62 (HLGK), R119, and R156. ATP-binding positions include K206, G294, E325, and 352 to 355 (GGDS).

Belongs to the phosphoglycerate kinase family. Monomer.

It is found in the cytoplasm. The enzyme catalyses (2R)-3-phosphoglycerate + ATP = (2R)-3-phospho-glyceroyl phosphate + ADP. The protein operates within carbohydrate degradation; glycolysis; pyruvate from D-glyceraldehyde 3-phosphate: step 2/5. This is Phosphoglycerate kinase from Staphylococcus aureus (strain bovine RF122 / ET3-1).